A 206-amino-acid polypeptide reads, in one-letter code: Putative transporter protein AmiS2 (206 aa).

A run of 7 helical transmembrane segments spans residues 4-24, 29-49, 56-76, 86-106, 113-133, 142-162, and 173-193; these read VGLL…LGTV, ASVL…VMLI, SAVL…YVGI, GIGW…FLSF, VFGV…LVLG, FTGW…AFLI, and VAAG…ILAA.

Belongs to the AmiS/UreI family.

It is found in the cell membrane. Functionally, possible transporter that might be responsible for the adsorption of amidase substrates or release of their hydrolysis products. The chain is Putative transporter protein AmiS2 (amiS2) from Rhodococcus erythropolis (Arthrobacter picolinophilus).